The primary structure comprises 61 residues: Large ribosomal subunit protein bL32 (61 aa).

Positions 1 to 19 (MAHPKRRQSKTRTAKRRTH) are enriched in basic residues. Residues 1–20 (MAHPKRRQSKTRTAKRRTHD) form a disordered region.

The protein belongs to the bacterial ribosomal protein bL32 family.

This Porphyromonas gingivalis (strain ATCC 33277 / DSM 20709 / CIP 103683 / JCM 12257 / NCTC 11834 / 2561) protein is Large ribosomal subunit protein bL32.